Here is a 99-residue protein sequence, read N- to C-terminus: DNA-binding protein Fis (99 aa).

Positions 75–94 (QTRAASIMGINRSTLRKKLK) form a DNA-binding region, H-T-H motif.

It belongs to the transcriptional regulatory Fis family. Homodimer.

Functionally, activates ribosomal RNA transcription. Plays a direct role in upstream activation of rRNA promoters. The polypeptide is DNA-binding protein Fis (Buchnera aphidicola subsp. Schizaphis graminum (strain Sg)).